Consider the following 433-residue polypeptide: GTPase Obg (433 aa).

The Obg domain occupies 1–159; sequence MKFVDSADLI…FEIRAELKVL (159 aa). In terms of domain architecture, OBG-type G spans 160 to 332; the sequence is ADVGFVGLPN…LLFMIYEELK (173 aa). GTP contacts are provided by residues 166–173, 191–195, 213–216, 284–287, and 313–315; these read GLPNAGKS, FTTIT, DLPG, NKMD, and SGL. Mg(2+) is bound by residues Ser-173 and Thr-193. Positions 355-433 constitute an OCT domain; that stretch reads KFEEQKEDIQ…VFDYELEWTD (79 aa).

It belongs to the TRAFAC class OBG-HflX-like GTPase superfamily. OBG GTPase family. As to quaternary structure, monomer. Requires Mg(2+) as cofactor.

It is found in the cytoplasm. Its function is as follows. An essential GTPase which binds GTP, GDP and possibly (p)ppGpp with moderate affinity, with high nucleotide exchange rates and a fairly low GTP hydrolysis rate. Plays a role in control of the cell cycle, stress response, ribosome biogenesis and in those bacteria that undergo differentiation, in morphogenesis control. This Mycoplasma mycoides subsp. mycoides SC (strain CCUG 32753 / NCTC 10114 / PG1) protein is GTPase Obg.